The chain runs to 299 residues: 4-hydroxybenzoate octaprenyltransferase (299 aa).

Transmembrane regions (helical) follow at residues 33-53 (VGFL…AGGV), 56-76 (WWTL…GCVI), 107-127 (LLMF…MNQL), 151-171 (LPQV…FAAI), 180-200 (WLLY…CAMV), 214-234 (AILF…LMLF), 247-267 (HTYW…FIIA), and 278-298 (AFMH…LATT).

This sequence belongs to the UbiA prenyltransferase family. Mg(2+) serves as cofactor.

Its subcellular location is the cell inner membrane. The enzyme catalyses all-trans-octaprenyl diphosphate + 4-hydroxybenzoate = 4-hydroxy-3-(all-trans-octaprenyl)benzoate + diphosphate. The protein operates within cofactor biosynthesis; ubiquinone biosynthesis. Catalyzes the prenylation of para-hydroxybenzoate (PHB) with an all-trans polyprenyl group. Mediates the second step in the final reaction sequence of ubiquinone-8 (UQ-8) biosynthesis, which is the condensation of the polyisoprenoid side chain with PHB, generating the first membrane-bound Q intermediate 3-octaprenyl-4-hydroxybenzoate. The chain is 4-hydroxybenzoate octaprenyltransferase from Xylella fastidiosa (strain 9a5c).